The following is a 176-amino-acid chain: Calponin-1 (176 aa).

The 104-residue stretch at 22–125 (PQTERQLRVW…STLIALASQA (104 aa)) folds into the Calponin-homology (CH) domain. A Calponin-like repeat occupies 158 to 176 (IGLQMGTNKFASQQGMTAY). Position 164 is a phosphothreonine; by ROCK2 (Thr164). Position 169 is a phosphoserine; by ROCK2 (Ser169). Thr174 is modified (phosphothreonine; by ROCK2).

This sequence belongs to the calponin family. In terms of tissue distribution, smooth muscle, and tissues containing significant amounts of smooth muscle.

Functionally, thin filament-associated protein that is implicated in the regulation and modulation of smooth muscle contraction. It is capable of binding to actin, calmodulin and tropomyosin. The interaction of calponin with actin inhibits the actomyosin Mg-ATPase activity. The sequence is that of Calponin-1 (CNN1) from Meleagris gallopavo (Wild turkey).